The following is a 120-amino-acid chain: U13-lycotoxin-Ls1e (120 aa).

The signal sequence occupies residues 1–16 (MKILFVLISILYAVYC). Positions 17 to 54 (FSSEEDVDSAYLANELEPVEDINSEQYAALEPKEEQER) are excised as a propeptide. Cystine bridges form between Cys-56–Cys-70, Cys-63–Cys-76, Cys-69–Cys-87, and Cys-78–Cys-85. The region spanning 56–95 (CAGMGRDCKDDCDCCLNIATCNCWFGRYFCSCTFGDYQTC) is the Agouti domain.

It belongs to the neurotoxin 05 (agouti) family. Contains 6 disulfide bonds. In terms of tissue distribution, expressed by the venom gland.

It localises to the secreted. The polypeptide is U13-lycotoxin-Ls1e (Lycosa singoriensis (Wolf spider)).